The sequence spans 480 residues: ATP synthase subunit beta (480 aa).

Residue 154–161 (GGAGVGKT) coordinates ATP.

It belongs to the ATPase alpha/beta chains family. In terms of assembly, F-type ATPases have 2 components, CF(1) - the catalytic core - and CF(0) - the membrane proton channel. CF(1) has five subunits: alpha(3), beta(3), gamma(1), delta(1), epsilon(1). CF(0) has four main subunits: a(1), b(1), b'(1) and c(9-12).

The protein localises to the cell inner membrane. The catalysed reaction is ATP + H2O + 4 H(+)(in) = ADP + phosphate + 5 H(+)(out). Functionally, produces ATP from ADP in the presence of a proton gradient across the membrane. The catalytic sites are hosted primarily by the beta subunits. The protein is ATP synthase subunit beta of Bradyrhizobium sp. (strain ORS 278).